The primary structure comprises 359 residues: MVDVANIHLPVLLDDCVNLMAPALEHENAVAVDCTLGLAGHSIAFLKTAPQARLIGIDRDSEALGLAAERMEREGLADRFIPVHAAFDQLDQVLTDRGIERVDAVFMDLGLSSLQIDETDRGFSYSHDAPLDMRMDVSQPLTAERILATYDAAELVRIFKEYGEERFSRQIARAIVAHRDKEPFTTTAQLNRLVDEVVPQAHRPAGNPAKRVFQALRIEVNGELDKLASTLPQAANRLHVGGRLVVESYHSLEDKTVKSFMAQGLRVDVPAGLPVIPPDAQPFFTDLTRGAIKADEHEIAANPRSASVRLRAVEVSRDIPSRWRKRFTQTAQGLNDINIQGSASPGRAKNTARIRTRRG.

S-adenosyl-L-methionine is bound by residues 39–41, aspartate 58, phenylalanine 87, aspartate 108, and glutamine 115; that span reads AGH. Residues 339–359 form a disordered region; sequence IQGSASPGRAKNTARIRTRRG. Over residues 350–359 the composition is skewed to basic residues; that stretch reads NTARIRTRRG.

Belongs to the methyltransferase superfamily. RsmH family.

It is found in the cytoplasm. The enzyme catalyses cytidine(1402) in 16S rRNA + S-adenosyl-L-methionine = N(4)-methylcytidine(1402) in 16S rRNA + S-adenosyl-L-homocysteine + H(+). In terms of biological role, specifically methylates the N4 position of cytidine in position 1402 (C1402) of 16S rRNA. The chain is Ribosomal RNA small subunit methyltransferase H from Bifidobacterium longum subsp. infantis (strain ATCC 15697 / DSM 20088 / JCM 1222 / NCTC 11817 / S12).